The chain runs to 1243 residues: Interphotoreceptor matrix proteoglycan 2 (1243 aa).

An N-terminal signal peptide occupies residues 1-27 (MIMFLPVGRMSLGILILFLTGGNLVSA). Residues 28 to 1106 (SEERQEPMHA…EFVSEPFVIG (1079 aa)) lie on the Extracellular side of the membrane. The tract at residues 205–234 (GLASESSAASPQESISNEIENVTEEPTQPA) is disordered. Over residues 207–220 (ASESSAASPQESIS) the composition is skewed to low complexity. Polar residues predominate over residues 221–230 (NEIENVTEEP). N-linked (GlcNAc...) asparagine glycosylation is present at Asn-225. The region spanning 235–349 (AEQIAEFSIQ…KPTAVYTISN (115 aa)) is the SEA 1 domain. The segment at 255 to 263 (RDPSSALYR) is hyaluronan-binding motif involved in chondroitin sulfate A-binding. Asn-297, Asn-316, and Asn-366 each carry an N-linked (GlcNAc...) asparagine glycan. 3 O-linked (GalNAc...) threonine glycosylation sites follow: Thr-427, Thr-428, and Thr-429. Asn-582 carries an N-linked (GlcNAc...) asparagine glycan. 3 O-linked (GalNAc...) threonine glycosylation sites follow: Thr-701, Thr-704, and Thr-712. Residues 748 to 762 (EDMVHTESSSHKELD) are compositionally biased toward basic and acidic residues. Residues 748-768 (EDMVHTESSSHKELDSEVPVS) form a disordered region. Residues Thr-817 and Thr-888 are each glycosylated (O-linked (GalNAc...) threonine). An SEA 2 domain is found at 900 to 1013 (GALVVFFSLR…YSLDVESGDE (114 aa)). N-linked (GlcNAc...) asparagine glycosylation is found at Asn-945 and Asn-959. 2 EGF-like domains span residues 1013–1054 (EANP…LPCQ) and 1055–1096 (SLCD…QHCE). Intrachain disulfides connect Cys-1017–Cys-1028, Cys-1022–Cys-1039, Cys-1041–Cys-1053, Cys-1057–Cys-1070, Cys-1064–Cys-1080, and Cys-1082–Cys-1095. The tract at residues 1083–1091 (RVGSNWWYR) is hyaluronan-binding motif involved in chondroitin sulfate C-binding. Residues 1107 to 1127 (ITIASVVSFLLVASAVVFFLV) form a helical membrane-spanning segment. The hyaluronan-binding motif involved in chondroitin sulfate A- and C-binding stretch occupies residues 1128–1136 (KMLQAQNVR). Topologically, residues 1128 to 1243 (KMLQAQNVRR…FVREHQMEEL (116 aa)) are cytoplasmic. The segment at 1139-1147 (RQRPTSSSR) is hyaluronan-binding motif involved in chondroitin sulfate C-binding. The tract at residues 1212–1220 (KEEIQERMR) is hyaluronan-binding motif involved in chondroitin sulfate A- and C-binding motif.

In terms of tissue distribution, expressed in the retina (at protein level). Expressed in the pineal gland.

It is found in the photoreceptor outer segment membrane. Its subcellular location is the photoreceptor inner segment membrane. The protein localises to the secreted. The protein resides in the extracellular space. It localises to the extracellular matrix. It is found in the interphotoreceptor matrix. Chondroitin sulfate- and hyaluronan-binding proteoglycan involved in the organization of interphotoreceptor matrix; may participate in the maturation and maintenance of the light-sensitive photoreceptor outer segment. Binds heparin. In Mus musculus (Mouse), this protein is Interphotoreceptor matrix proteoglycan 2 (Impg2).